Here is a 287-residue protein sequence, read N- to C-terminus: Seed leukoagglutinin (287 aa).

The signal sequence occupies residues 1 to 29; the sequence is MATSNSKPTQVLLATFLTFFFLLLNNVNS. Position 74 (Tyr-74) interacts with N-acetyl-alpha-neuraminyl-(2-&gt;3)-beta-D-galactosyl-(1-&gt;4)-beta-D-glucose. Asn-90 carries an N-linked (GlcNAc...) (paucimannose) asparagine glycan. N-acetyl-alpha-neuraminyl-(2-&gt;3)-beta-D-galactosyl-(1-&gt;4)-beta-D-glucose-binding residues include Asp-116, Ser-133, and Lys-136. An N-linked (GlcNAc...) (paucimannose) asparagine glycan is attached at Asn-142. Mn(2+) is bound by residues Glu-156 and Asp-158. Ca(2+) contacts are provided by Asp-158, Tyr-160, Asp-166, and Asp-169. N-acetyl-alpha-neuraminyl-(2-&gt;3)-beta-D-galactosyl-(1-&gt;4)-beta-D-glucose is bound by residues Tyr-160 and Asp-166. Mn(2+)-binding residues include Asp-169 and His-174. Asn-208 carries an N-linked (GlcNAc...) (high mannose) asparagine; partial glycan. N-linked (GlcNAc...) (paucimannose) asparagine; partial glycosylation is present at Asn-220. Position 253 (Glu-253) interacts with N-acetyl-alpha-neuraminyl-(2-&gt;3)-beta-D-galactosyl-(1-&gt;4)-beta-D-glucose. Residues 279-287 constitute a propeptide, removed in mature form; sequence NVHIARYTA.

It belongs to the leguminous lectin family. In terms of assembly, homodimer; disulfide-linked. Dimer of homodimers. In terms of processing, the glycosylation on N-90 is determined to by of the high mannose type in PubMed:26003537, while PubMed:27720757 found a paucimannose at this position. Post-translationally, processed at its C-terminus.

Sialic acid-binding lectin recognizing oligosaccharides containing terminal sialic acid linked via alpha-2,3 bond to penultimate galactose residues. Binds the trisaccharide sequence Neu5Ac-alpha-2,3-Gal-beta-1,4-GlcNAc. Binds fetuin when fully glycosylated but not when the high mannose-type glycans are removed, although the secondary structure is virtually unaffected by deglycosylation of the high mannose-type glycans. The lectin activity may depend on the presence of a single GlcNAc attached to N-90. In Maackia amurensis (Amur maackia), this protein is Seed leukoagglutinin.